Here is a 330-residue protein sequence, read N- to C-terminus: Syntaxin-121 (330 aa).

Over residues Met1–Lys10 the composition is skewed to polar residues. The tract at residues Met1–Gly39 is disordered. Over Met1–Trp284 the chain is Cytoplasmic. Residues Thr12–Val28 are compositionally biased toward gly residues. The 63-residue stretch at Val212 to Ala274 folds into the t-SNARE coiled-coil homology domain. The chain crosses the membrane as a helical; Anchor for type IV membrane protein span at residues Thr285–Leu305. Over Lys306 to Ala330 the chain is Vesicular. The tract at residues Asn311–Ala330 is disordered. The span at Pro320–Ala330 shows a compositional bias: pro residues.

Belongs to the syntaxin family. In terms of assembly, interacts with SNAP32. As to expression, expressed in roots, stems, leaf blades and leaf sheaths.

The protein localises to the cell membrane. In terms of biological role, vesicle trafficking protein that functions in the secretory pathway. Involved in plant defense by mediating host resistance to the rice blast fungus Magnaporthe oryzae. The interaction with SNAP32 may contribute to host resistance to the rice blast fungus. The protein is Syntaxin-121 of Oryza sativa subsp. japonica (Rice).